The sequence spans 92 residues: Small ribosomal subunit protein uS19 (92 aa).

It belongs to the universal ribosomal protein uS19 family.

Functionally, protein S19 forms a complex with S13 that binds strongly to the 16S ribosomal RNA. This chain is Small ribosomal subunit protein uS19, found in Wigglesworthia glossinidia brevipalpis.